We begin with the raw amino-acid sequence, 210 residues long: Redox-sensing transcriptional repressor Rex (210 aa).

A DNA-binding region (H-T-H motif) is located at residues 16-55 (IYMRTLQELLEDDVDVISSERLAKQCGVNPAQIRKDLAYF). NAD(+) is bound at residue 90–95 (GLGNLG).

This sequence belongs to the transcriptional regulatory Rex family. As to quaternary structure, homodimer.

It is found in the cytoplasm. Functionally, modulates transcription in response to changes in cellular NADH/NAD(+) redox state. This is Redox-sensing transcriptional repressor Rex from Syntrophobacter fumaroxidans (strain DSM 10017 / MPOB).